The chain runs to 172 residues: ATP synthase subunit b (172 aa).

Residues 13–33 (GINGGDILFQLVMFLILLALL) traverse the membrane as a helical segment.

The protein belongs to the ATPase B chain family. In terms of assembly, F-type ATPases have 2 components, F(1) - the catalytic core - and F(0) - the membrane proton channel. F(1) has five subunits: alpha(3), beta(3), gamma(1), delta(1), epsilon(1). F(0) has three main subunits: a(1), b(2) and c(10-14). The alpha and beta chains form an alternating ring which encloses part of the gamma chain. F(1) is attached to F(0) by a central stalk formed by the gamma and epsilon chains, while a peripheral stalk is formed by the delta and b chains.

It is found in the cell membrane. In terms of biological role, f(1)F(0) ATP synthase produces ATP from ADP in the presence of a proton or sodium gradient. F-type ATPases consist of two structural domains, F(1) containing the extramembraneous catalytic core and F(0) containing the membrane proton channel, linked together by a central stalk and a peripheral stalk. During catalysis, ATP synthesis in the catalytic domain of F(1) is coupled via a rotary mechanism of the central stalk subunits to proton translocation. Its function is as follows. Component of the F(0) channel, it forms part of the peripheral stalk, linking F(1) to F(0). This Priestia megaterium (strain ATCC 12872 / QMB1551) (Bacillus megaterium) protein is ATP synthase subunit b.